Consider the following 149-residue polypeptide: SsrA-binding protein (149 aa).

Positions 121–149 are disordered; sequence GKKQHDKRADELDKDSKREAQRAMKERQR. The span at 127–149 shows a compositional bias: basic and acidic residues; the sequence is KRADELDKDSKREAQRAMKERQR.

The protein belongs to the SmpB family.

It localises to the cytoplasm. Its function is as follows. Required for rescue of stalled ribosomes mediated by trans-translation. Binds to transfer-messenger RNA (tmRNA), required for stable association of tmRNA with ribosomes. tmRNA and SmpB together mimic tRNA shape, replacing the anticodon stem-loop with SmpB. tmRNA is encoded by the ssrA gene; the 2 termini fold to resemble tRNA(Ala) and it encodes a 'tag peptide', a short internal open reading frame. During trans-translation Ala-aminoacylated tmRNA acts like a tRNA, entering the A-site of stalled ribosomes, displacing the stalled mRNA. The ribosome then switches to translate the ORF on the tmRNA; the nascent peptide is terminated with the 'tag peptide' encoded by the tmRNA and targeted for degradation. The ribosome is freed to recommence translation, which seems to be the essential function of trans-translation. In Dechloromonas aromatica (strain RCB), this protein is SsrA-binding protein.